A 367-amino-acid polypeptide reads, in one-letter code: Chorismate synthase (367 aa).

A disordered region spans residues 41–60; it reads FTHDLQRRASGKSRHTSARR. R48 and R54 together coordinate NADP(+). FMN-binding positions include 125 to 127, 238 to 239, G278, 293 to 297, and R319; these read RSS, NA, and KPTSS.

It belongs to the chorismate synthase family. Homotetramer. Requires FMNH2 as cofactor.

It carries out the reaction 5-O-(1-carboxyvinyl)-3-phosphoshikimate = chorismate + phosphate. It functions in the pathway metabolic intermediate biosynthesis; chorismate biosynthesis; chorismate from D-erythrose 4-phosphate and phosphoenolpyruvate: step 7/7. Catalyzes the anti-1,4-elimination of the C-3 phosphate and the C-6 proR hydrogen from 5-enolpyruvylshikimate-3-phosphate (EPSP) to yield chorismate, which is the branch point compound that serves as the starting substrate for the three terminal pathways of aromatic amino acid biosynthesis. This reaction introduces a second double bond into the aromatic ring system. The chain is Chorismate synthase from Xanthomonas axonopodis pv. citri (strain 306).